The following is a 293-amino-acid chain: N-acetylneuraminate lyase (293 aa).

Positions 48 and 49 each coordinate aceneuramate. Tyr137 acts as the Proton donor in catalysis. The Schiff-base intermediate with substrate role is filled by Lys165. 5 residues coordinate aceneuramate: Thr167, Gly189, Asp191, Glu192, and Ser208.

Belongs to the DapA family. NanA subfamily. As to quaternary structure, homotetramer.

The protein resides in the cytoplasm. The catalysed reaction is aceneuramate = aldehydo-N-acetyl-D-mannosamine + pyruvate. It functions in the pathway amino-sugar metabolism; N-acetylneuraminate degradation; D-fructose 6-phosphate from N-acetylneuraminate: step 1/5. Functionally, catalyzes the reversible aldol cleavage of N-acetylneuraminic acid (sialic acid; Neu5Ac) to form pyruvate and N-acetylmannosamine (ManNAc) via a Schiff base intermediate. The protein is N-acetylneuraminate lyase of Staphylococcus carnosus (strain TM300).